A 502-amino-acid chain; its full sequence is Alpha-globin transcription factor CP2 (502 aa).

Residues 63–300 form the Grh/CP2 DB domain; it reads EILPFQYVLC…SPGFNSSHSS (238 aa). The DNA-binding stretch occupies residues 133–386; it reads EHQQLEGWRW…LFNALKGRMV (254 aa). Basic and acidic residues predominate over residues 241-265; sequence KGADRKQKIDREKMEKRTPHEKEKY. Disordered regions lie at residues 241–268 and 294–326; these read KGAD…YQPS and FNSS…NLLP. The residue at position 353 (Ser-353) is a Phosphoserine.

This sequence belongs to the grh/CP2 family. CP2 subfamily. In terms of assembly, binds to DNA as a dimer. Interacts with UBP1 and PIAS1, and is probably part of a complex containing TFCP2, UBP1 and PIAS1. Component of the SSP (stage selector protein) complex, which appears to be a heteromer of TFCP2 and 2 copies of NFE4.

The protein resides in the nucleus. In terms of biological role, binds a variety of cellular promoters including fibrinogen, alpha-globin promoters. Activation of the alpha-globin promoter in erythroid cells is via synergistic interaction with UBP1. Functions as part of the SSP (stage selector protein) complex. Facilitates the interaction of the gamma-globin genes with enhancer elements contained in the locus control region in fetal erythroid cells. Interacts by binding to the stage selector element (SSE) in the proximal gamma-globin promoter. The sequence is that of Alpha-globin transcription factor CP2 (Tfcp2) from Mus musculus (Mouse).